The chain runs to 113 residues: MKVFSTSLWCGLLTLLSVMNLFKSVRGRPHLSSGHELFPAKEHAAQEKLTRNPGLQRPFHAGGDLPSKLEELRQVKKLRDWIMEAKNTGLSNALDNLSSSHTKKRACFWKYCV.

The N-terminal stretch at 1–27 (MKVFSTSLWCGLLTLLSVMNLFKSVRG) is a signal peptide. Residues 28–103 (RPHLSSGHEL…LDNLSSSHTK (76 aa)) constitute a propeptide that is removed on maturation. Cysteine 107 and cysteine 112 form a disulfide bridge.

The protein belongs to the urotensin-2 family.

The protein localises to the secreted. Functionally, potent vasoconstrictor. This is Urotensin-2B (Uts2b) from Mus musculus (Mouse).